The primary structure comprises 314 residues: L-lactate dehydrogenase (314 aa).

Residues valine 17, aspartate 38, lysine 43, tyrosine 69, and glycine 83–alanine 84 contribute to the NAD(+) site. Substrate-binding residues include glutamine 86 and arginine 92. NAD(+)-binding positions include serine 105, alanine 122–asparagine 124, and serine 147. Asparagine 124–aspartate 127 contacts substrate. Aspartate 152–arginine 155 serves as a coordination point for substrate. Beta-D-fructose 1,6-bisphosphate is bound by residues arginine 157 and histidine 172. Residue histidine 179 is the Proton acceptor of the active site. Tyrosine 223 is subject to Phosphotyrosine. A substrate-binding site is contributed by threonine 232.

The protein belongs to the LDH/MDH superfamily. LDH family. In terms of assembly, homotetramer.

Its subcellular location is the cytoplasm. The catalysed reaction is (S)-lactate + NAD(+) = pyruvate + NADH + H(+). Its pathway is fermentation; pyruvate fermentation to lactate; (S)-lactate from pyruvate: step 1/1. Allosterically activated by fructose 1,6-bisphosphate (FBP). Functionally, catalyzes the conversion of lactate to pyruvate. In Corynebacterium glutamicum (strain ATCC 13032 / DSM 20300 / JCM 1318 / BCRC 11384 / CCUG 27702 / LMG 3730 / NBRC 12168 / NCIMB 10025 / NRRL B-2784 / 534), this protein is L-lactate dehydrogenase.